The sequence spans 172 residues: Austinoid biosynthesis clusters protein J (172 aa).

This sequence belongs to the trt14 isomerase family. Homodimer.

It participates in secondary metabolite biosynthesis; terpenoid biosynthesis. Functionally, part of the gene cluster B that mediates the biosynthesis of the fungal meroterpenoid acetoxydehydroaustin. The first step of the pathway is the synthesis of 3,5-dimethylorsellinic acid by the polyketide synthase ausA. 3,5-dimethylorsellinic acid is then prenylated by the polyprenyl transferase ausN. Further epoxidation by the FAD-dependent monooxygenase ausM and cyclization by the probable terpene cyclase ausL lead to the formation of protoaustinoid A. Protoaustinoid A is then oxidized to spiro-lactone preaustinoid A3 by the combined action of the FAD-binding monooxygenases ausB and ausC, and the dioxygenase ausE. Acid-catalyzed keto-rearrangement and ring contraction of the tetraketide portion of preaustinoid A3 by ausJ lead to the formation of preaustinoid A4. The aldo-keto reductase ausK, with the help of ausH, is involved in the next step by transforming preaustinoid A4 into isoaustinone which is in turn hydroxylated by the P450 monooxygenase ausI to form austinolide. The cytochrome P450 monooxygenase ausG then modifies austinolide to austinol. Austinol is further acetylated to austin by the O-acetyltransferase ausP, which spontaneously changes to dehydroaustin. The cytochrome P450 monooxygenase then converts dehydroaustin is into 7-dehydrodehydroaustin. The hydroxylation catalyzed by ausR permits the second O-acetyltransferase ausQ to add an additional acetyl group to the molecule, leading to the formation of acetoxydehydroaustin. Due to genetic rearrangements of the clusters and the subsequent loss of some enzymes, the end product of the Penicillium brasilianum austinoid biosynthesis clusters is acetoxydehydroaustin. In Penicillium brasilianum, this protein is Austinoid biosynthesis clusters protein J.